The primary structure comprises 161 residues: Nucleotide-binding protein NE2248 (161 aa).

The protein belongs to the YajQ family.

Its function is as follows. Nucleotide-binding protein. This chain is Nucleotide-binding protein NE2248, found in Nitrosomonas europaea (strain ATCC 19718 / CIP 103999 / KCTC 2705 / NBRC 14298).